The primary structure comprises 212 residues: Transcriptional repressor CcpN (212 aa).

Positions 6–70 (LNKRQEHILQ…FYTGKTGTQL (65 aa)) constitute an HTH deoR-type domain. The H-T-H motif DNA-binding region spans 23 to 42 (ITGEHIAEKLNLTRATLRPD). CBS domains follow at residues 83–139 (FQSI…QQEL) and 148–211 (MTRM…ENEI).

Functionally, transcription repressor that binds to the promoter of gapB and pckA genes, preventing their expression. Acts as a regulator for catabolite repression of gluconeogenic genes. The sequence is that of Transcriptional repressor CcpN (ccpN) from Bacillus subtilis (strain 168).